Reading from the N-terminus, the 689-residue chain is MIDSVKLRRDSAADFFSHYEYLCALQNSVPLPAVRACLREGVLDFNADRLRGVDWAPLLSTLKINKDLPLVSIKSFFQPWLGDTGSDMNKFCRSRVPAIRYKDVTFQLCKALKGCLSISSVLKNLELNGLILRERDLTILAKGLNKSASLVHLSLANCPIGDGGLEIICQGIKSSITLKTVNFTGCNLTWQGADHMAKILKYQTMRRHEETWAESLRYRRPDLDCMAGLRRITLNCNTLIGDLGACAFADSLSEDLWLRALDLQQCGLTNEGAKALLEALETNTTLVVLDIRKNPLIDHSMMKAVIKKVLQNGRSAKSEYQWITSPSVKEPSKTAKQKRRTIILGSGHKGKATIRIGLATKKPVSSGRKHSLGKEYYAPAPLPPGVSGFLPWRTAERAKRHRGFPLIKTRDICNQLQQPGFPVTVTVESPSSSEVEEVDDSSESVHEVPEKTSIEQEALQEKLEECLKQLKEERVIRLKVDKRVSELEHENAQLRNINFSLSEALHAQSLTNMILDDEGVLGSIENSFQKFHAFLDLLKDAGLGQLATMAGIDQSDFQLLGHPQMTSTVSNPPKEEKKALEDEKPEPKQNALGQMQNIQFQKITGDARIPLPLDSFPVPVSTPEGLGTSSNNLGVPATEQRQESFEGFIARMCSPSPDATSGTGSQRKEEELSRNSRSSSEKKTKTESH.

A phosphoserine mark is found at Ser-325 and Ser-327. Disordered regions lie at residues Ser-432 to Lys-451, Pro-563 to Gln-589, and Asp-614 to His-689. Residues Glu-450–Leu-505 are a coiled coil. 2 stretches are compositionally biased toward basic and acidic residues: residues Pro-573 to Pro-587 and Gln-666 to His-689.

The protein belongs to the CEP78 family. Interacts with PLK4. Interacts with FAM161A. Interacts with IFT20; regulating IFT20 stability and localization. Interacts with TTC21A; regulating TTC21A stability and localization. Interacts with USP16; promoting USP16-dependent deubiquitination of tektins. Interacts with DCAF1/VPRBP; promoting localization of the EDVP complex to centrosomes. Interacts with CEP350; promoting CEP78 localization to centrosome and centriole. Widely expressed. Expressed in different retinal cell types with higher expression in cone compared to rod cells (at protein level).

It localises to the cytoplasm. The protein localises to the cytoskeleton. The protein resides in the microtubule organizing center. It is found in the centrosome. Its subcellular location is the centriole. It localises to the cilium basal body. Centriole wall protein that localizes to mature centrioles and regulates centriole and cilia biogenesis. Involved in centrosome duplication: required for efficient PLK4 centrosomal localization and PLK4-induced overduplication of centrioles. Involved in cilium biogenesis and controls cilium length. Acts as a regulator of protein stability by preventing ubiquitination of centrosomal proteins, such as CCP110 and tektins. Associates with the EDVP complex, preventing ubiquitination and degradation of CCP110. Promotes deubiquitination of tektin proteins (TEKT1, TEKT2, TEK3, TEKT4 and TEKT5) via its interaction with USP16. This is Centrosomal protein of 78 kDa from Homo sapiens (Human).